A 558-amino-acid polypeptide reads, in one-letter code: Glucose-6-phosphate isomerase (558 aa).

Position 2 is an N-acetylalanine (A2). K12 carries the N6-acetyllysine modification. Residue K34 is modified to N6-(2-hydroxyisobutyryl)lysine. S107 is subject to Phosphoserine. T109 bears the Phosphothreonine mark. Residue K142 is modified to N6-acetyllysine. Position 159 to 160 (159 to 160 (GS)) interacts with D-glucose 6-phosphate. S185 is modified (phosphoserine; by CK2). 210-215 (SKTFTT) contacts D-glucose 6-phosphate. T250 carries the phosphothreonine modification. D-glucose 6-phosphate contacts are provided by Q354, E358, and H389. E358 (proton donor) is an active-site residue. Residue H389 is part of the active site. K454 bears the N6-acetyllysine; alternate mark. The residue at position 454 (K454) is an N6-malonyllysine; alternate. An N6-succinyllysine; alternate modification is found at K454. S455 bears the Phosphoserine mark. K519 is a D-glucose 6-phosphate binding site. K519 is a catalytic residue.

Belongs to the GPI family. Homodimer; in the catalytically active form. Monomer in the secreted form. In terms of processing, phosphorylation at Ser-185 by CK2 has been shown to decrease enzymatic activity and may contribute to secretion by a non-classical secretory pathway. Post-translationally, ISGylated.

The protein localises to the cytoplasm. Its subcellular location is the secreted. The catalysed reaction is alpha-D-glucose 6-phosphate = beta-D-fructose 6-phosphate. The protein operates within carbohydrate degradation; glycolysis; D-glyceraldehyde 3-phosphate and glycerone phosphate from D-glucose: step 2/4. Its function is as follows. In the cytoplasm, catalyzes the conversion of glucose-6-phosphate to fructose-6-phosphate, the second step in glycolysis, and the reverse reaction during gluconeogenesis. Besides it's role as a glycolytic enzyme, also acts as a secreted cytokine: acts as an angiogenic factor (AMF) that stimulates endothelial cell motility. Acts as a neurotrophic factor, neuroleukin, for spinal and sensory neurons. It is secreted by lectin-stimulated T-cells and induces immunoglobulin secretion. This Pongo abelii (Sumatran orangutan) protein is Glucose-6-phosphate isomerase.